We begin with the raw amino-acid sequence, 423 residues long: D-tagatose-1,6-bisphosphate aldolase subunit GatZ (423 aa).

It belongs to the GatZ/KbaZ family. GatZ subfamily. Forms a complex with GatY.

It functions in the pathway carbohydrate metabolism; D-tagatose 6-phosphate degradation; D-glyceraldehyde 3-phosphate and glycerone phosphate from D-tagatose 6-phosphate: step 2/2. Component of the tagatose-1,6-bisphosphate aldolase GatYZ that is required for full activity and stability of the Y subunit. Could have a chaperone-like function for the proper and stable folding of GatY. When expressed alone, GatZ does not show any aldolase activity. Is involved in the catabolism of galactitol. This chain is D-tagatose-1,6-bisphosphate aldolase subunit GatZ, found in Salmonella choleraesuis (strain SC-B67).